The primary structure comprises 350 residues: MSKNKLSKGQQRRVNANHQRRLKTSKEKPDYDDNLFGEPDEGIVISRFGMHADVESADGDVHRCNIRRTIRSLVTGDRVVWRPGKPAAEGVNVKGIVEAVHERTSVLTRPDFYDGVKPIAANIDQIVIVSAILPELSLNIIDRYLVACETLQIEPIIVLNKIDLLDDEGMKFVNEQMDIYRNIGYRVLMVSSHTQDGLKPLEEALTGRISIFAGQSGVGKSSLLNALLGLQKEILTNDVSDNSGLGQHTTTAARLYHFPHGGDVIDSPGVREFGLWHLEPEQITQGFVEFHDYLGLCKYRDCKHDTDPGCAIREAVEEGKIAETRFENYHRILESMAQVKTRKNFSDTDD.

Residues 1-17 show a composition bias toward polar residues; the sequence is MSKNKLSKGQQRRVNAN. The tract at residues 1 to 33 is disordered; it reads MSKNKLSKGQQRRVNANHQRRLKTSKEKPDYDD. The 170-residue stretch at 104–273 folds into the CP-type G domain; that stretch reads TSVLTRPDFY…VIDSPGVREF (170 aa). Residues 160–163 and 214–222 contribute to the GTP site; these read NKID and GQSGVGKSS. Zn(2+) is bound by residues Cys-297, Cys-302, His-304, and Cys-310.

The protein belongs to the TRAFAC class YlqF/YawG GTPase family. RsgA subfamily. Monomer. Associates with 30S ribosomal subunit, binds 16S rRNA. Requires Zn(2+) as cofactor.

It is found in the cytoplasm. Functionally, one of several proteins that assist in the late maturation steps of the functional core of the 30S ribosomal subunit. Helps release RbfA from mature subunits. May play a role in the assembly of ribosomal proteins into the subunit. Circularly permuted GTPase that catalyzes slow GTP hydrolysis, GTPase activity is stimulated by the 30S ribosomal subunit. In Escherichia coli (strain SMS-3-5 / SECEC), this protein is Small ribosomal subunit biogenesis GTPase RsgA.